A 219-amino-acid chain; its full sequence is MTEFIPLFAVRRNYGDVSGTRSVYLTFDDGPNPFCTPDVLDVLTQHRVPATFFVIGTYVANQPELIRRMVAEGHEVANHTMTHPDLSRCEPAEVHDEVLTASRAIRSACPQALPRHMRAPYGIWTQDVLATSAKAGLAAVHWSVDPRDWARPGVDRIVSSVLAAIRPGAIVLLHDGYPPGEERSCTDATSRDQTVRALSYLIPALQRRGFEIHPLPQLH.

Residues R21–H213 form the NodB homology domain. The active-site Proton acceptor is the D28. H79 and H83 together coordinate a divalent metal cation. H174 serves as the catalytic Proton donor.

Belongs to the polysaccharide deacetylase family.

Its subcellular location is the cytoplasm. Its function is as follows. Is involved in generating a small heat-stable compound (Nod), an acylated oligomer of N-acetylglucosamine, that stimulates mitosis in various plant protoplasts. The chain is Chitooligosaccharide deacetylase (nodB) from Bradyrhizobium sp. (strain ANU 289).